Reading from the N-terminus, the 267-residue chain is Trehalose 2-sulfotransferase (267 aa).

Residues Gln14, 33-39 (EPQEFFQ), Pro48, and Trp53 each bind alpha,alpha-trehalose. Catalysis depends on Glu36, which acts as the Proton acceptor.

It belongs to the Stf0 sulfotransferase family. As to quaternary structure, homodimer.

It catalyses the reaction alpha,alpha-trehalose + 3'-phosphoadenylyl sulfate = 2-O-sulfo-alpha,alpha-trehalose + adenosine 3',5'-bisphosphate + H(+). The protein operates within glycolipid metabolism. Catalyzes the sulfuryl group transfer from 3'-phosphoadenosine-5'-phosphosulfate (PAPS) to trehalose, leading to trehalose-2-sulfate (T2S). The sulfation of trehalose is the first step in the biosynthesis of sulfolipid-1 (SL-1), a major cell wall glycolipid and the most abundant sulfated metabolite found in Mycobacterium tuberculosis, that is a potential virulence factor thought to mediate host-pathogen interactions. The sequence is that of Trehalose 2-sulfotransferase from Mycobacterium tuberculosis (strain ATCC 35801 / TMC 107 / Erdman).